The sequence spans 120 residues: NLYQFGKMINHMVGKSPIFSYGDYGCYCGWGGKGTPVDATDRCCFVHDCCYGRANGCDPKLSTYSYNFQNGNIVCGNKYGCLRHICECDRVAAICFGENVNTYDKKFLSSSRCRQTSEQC.

Cystine bridges form between Cys26–Cys113, Cys28–Cys44, Cys43–Cys95, Cys49–Cys120, Cys50–Cys88, Cys57–Cys81, and Cys75–Cys86. The Ca(2+) site is built by Tyr27, Gly29, and Gly31. The active site involves His47. Asp48 contributes to the Ca(2+) binding site. Asp89 is a catalytic residue.

This sequence belongs to the phospholipase A2 family. Group II subfamily. D49 sub-subfamily. As to quaternary structure, monomer. It depends on Ca(2+) as a cofactor. Expressed by the venom gland.

The protein resides in the secreted. The catalysed reaction is a 1,2-diacyl-sn-glycero-3-phosphocholine + H2O = a 1-acyl-sn-glycero-3-phosphocholine + a fatty acid + H(+). In terms of biological role, basic phospholipase A2 that inhibits ADP-, thrombin- and arachidonic acid-induced platelet aggregation. It also exhibits anticoagulant effects upon human plasma in vitro. It induces a high hemolytic activity reaching its maximum after 24 hours. It induces a marked elevation of plasmatic levels of interleukin-6 and -10, eosinophil peroxidase and complement lytic activities and it also provokes a drastic increase of lymphocytes, monocytes and neutrophils in peripheral blood accompanied by a rapid intense migration of neutrophils to the peritoneal cavity. PLA2 catalyzes the calcium-dependent hydrolysis of the 2-acyl groups in 3-sn-phosphoglycerides. The protein is Basic phospholipase A2 Cc2-PLA2 of Cerastes cerastes (Horned desert viper).